The primary structure comprises 256 residues: Distal membrane-arm assembly complex protein 2 (256 aa).

Serine 252 carries the post-translational modification Phosphoserine.

It belongs to the ATP synthase subunit s family. Interacts with incompletely assembled mitochondrial NADH:ubiquinone oxidoreductase complex (complex I).

The protein resides in the mitochondrion. In terms of biological role, required for the assembly of the mitochondrial NADH:ubiquinone oxidoreductase complex (complex I). Involved in the assembly of the distal region of complex I. The sequence is that of Distal membrane-arm assembly complex protein 2 from Macaca fascicularis (Crab-eating macaque).